The following is a 178-amino-acid chain: Caveolin-1 (178 aa).

Ser2 bears the N-acetylserine mark. Position 2 is a phosphoserine (Ser2). Residues 2-94 form a required for homooligomerization region; sequence SGGKYVDAEG…WKASFTTFTV (93 aa). Topologically, residues 2–104 are cytoplasmic; the sequence is SGGKYVDAEG…TKYWFYRLLS (103 aa). Lys5 is modified (N6-acetyllysine; alternate). Lys5 is covalently cross-linked (Glycyl lysine isopeptide (Lys-Gly) (interchain with G-Cter in ubiquitin); alternate). Tyr6 is subject to Phosphotyrosine. The residue at position 14 (Tyr14) is a Phosphotyrosine; by ABL1. Phosphotyrosine is present on Tyr25. Residues Lys26, Lys30, Lys39, Lys47, and Lys57 each participate in a glycyl lysine isopeptide (Lys-Gly) (interchain with G-Cter in ubiquitin) cross-link. The interval 82–94 is interaction with CAVIN3; sequence DGIWKASFTTFTV. The segment at residues 105 to 125 is an intramembrane region (helical); the sequence is ALLGIPLALLWGIYFAILSFL. Topologically, residues 126-178 are cytoplasmic; that stretch reads HIWAVVPCIRSYLIEIQCISRVYSICIHTFCDPLFEAIGKVFSNIRATVQKEI. The tract at residues 131-142 is interacts with SPRY1, SPRY2, SPRY3 and SPRY4; the sequence is VPCIRSYLIEIQ. S-palmitoyl cysteine attachment occurs at residues Cys133, Cys143, and Cys156. The interval 149 to 160 is interacts with SPRY1, SPRY2, and SPRY4; that stretch reads SICIHTFCDPLF. The segment at 167–178 is interacts with SPRY1, SPRY2, SPRY3 and SPRY4; that stretch reads FSNIRATVQKEI.

This sequence belongs to the caveolin family. As to quaternary structure, homooligomer. Interacts with GLIPR2. Interacts with NOSTRIN. Interacts with SNAP25 and STX1A. Interacts (via the N-terminus) with DPP4; the interaction is direct. Interacts with CTNNB1, CDH1 and JUP. Interacts with PACSIN2; this interaction induces membrane tubulation. Interacts with SLC7A9. Interacts with BMX and BTK. Interacts with TGFBR1. Interacts with CAVIN3 (via leucine-zipper domain) in a cholesterol-sensitive manner. Interacts with CAVIN1. Interacts with EHD2 in a cholesterol-dependent manner. Forms a ternary complex with UBXN6 and VCP; mediates CAV1 targeting to lysosomes for degradation. Interacts with ABCG1; this interaction regulates ABCG1-mediated cholesterol efflux. Interacts with NEU3; this interaction enhances NEU3 sialidase activity within caveola. Interacts (via C-terminus) with SPRY1, SPRY2 (via C-terminus), SPRY3, and SPRY4. Interacts with IGFBP5; this interaction allows trafficking of IGFBP5 from the plasma membrane to the nucleus. Phosphorylated at Tyr-14 by ABL1 in response to oxidative stress. In terms of processing, ubiquitinated. Undergo monoubiquitination and multi- and/or polyubiquitination. Monoubiquitination of N-terminal lysines promotes integration in a ternary complex with UBXN6 and VCP which promotes oligomeric CAV1 targeting to lysosomes for degradation. Ubiquitinated by ZNRF1; leading to degradation and modulation of the TLR4-mediated immune response.

It localises to the golgi apparatus membrane. It is found in the cell membrane. The protein resides in the membrane. The protein localises to the caveola. Its subcellular location is the membrane raft. In terms of biological role, may act as a scaffolding protein within caveolar membranes. Forms a stable heterooligomeric complex with CAV2 that targets to lipid rafts and drives caveolae formation. Mediates the recruitment of CAVIN proteins (CAVIN1/2/3/4) to the caveolae. Interacts directly with G-protein alpha subunits and can functionally regulate their activity. Involved in the costimulatory signal essential for T-cell receptor (TCR)-mediated T-cell activation. Its binding to DPP4 induces T-cell proliferation and NF-kappa-B activation in a T-cell receptor/CD3-dependent manner. Recruits CTNNB1 to caveolar membranes and may regulate CTNNB1-mediated signaling through the Wnt pathway. Negatively regulates TGFB1-mediated activation of SMAD2/3 by mediating the internalization of TGFBR1 from membrane rafts leading to its subsequent degradation. Binds 20(S)-hydroxycholesterol (20(S)-OHC). This is Caveolin-1 (CAV1) from Ornithorhynchus anatinus (Duckbill platypus).